The primary structure comprises 192 residues: Ribosomal RNA small subunit methyltransferase G (192 aa).

Residues Gly-63, Phe-68, 112–113 (IE), and Arg-125 each bind S-adenosyl-L-methionine.

Belongs to the methyltransferase superfamily. RNA methyltransferase RsmG family.

The protein resides in the cytoplasm. It carries out the reaction guanosine(527) in 16S rRNA + S-adenosyl-L-methionine = N(7)-methylguanosine(527) in 16S rRNA + S-adenosyl-L-homocysteine. In terms of biological role, specifically methylates the N7 position of guanine in position 527 of 16S rRNA. The protein is Ribosomal RNA small subunit methyltransferase G of Rickettsia bellii (strain OSU 85-389).